Consider the following 152-residue polypeptide: 6,7-dimethyl-8-ribityllumazine synthase (152 aa).

5-amino-6-(D-ribitylamino)uracil is bound by residues phenylalanine 22, 54–56, and 78–80; these read AFE and AVI. Residue 83 to 84 participates in (2S)-2-hydroxy-3-oxobutyl phosphate binding; that stretch reads ET. The active-site Proton donor is the histidine 86. A 5-amino-6-(D-ribitylamino)uracil-binding site is contributed by phenylalanine 111. A (2S)-2-hydroxy-3-oxobutyl phosphate-binding site is contributed by arginine 125.

Belongs to the DMRL synthase family.

The enzyme catalyses (2S)-2-hydroxy-3-oxobutyl phosphate + 5-amino-6-(D-ribitylamino)uracil = 6,7-dimethyl-8-(1-D-ribityl)lumazine + phosphate + 2 H2O + H(+). The protein operates within cofactor biosynthesis; riboflavin biosynthesis; riboflavin from 2-hydroxy-3-oxobutyl phosphate and 5-amino-6-(D-ribitylamino)uracil: step 1/2. Functionally, catalyzes the formation of 6,7-dimethyl-8-ribityllumazine by condensation of 5-amino-6-(D-ribitylamino)uracil with 3,4-dihydroxy-2-butanone 4-phosphate. This is the penultimate step in the biosynthesis of riboflavin. This Limosilactobacillus reuteri (strain DSM 20016) (Lactobacillus reuteri) protein is 6,7-dimethyl-8-ribityllumazine synthase.